Here is a 230-residue protein sequence, read N- to C-terminus: ATP-dependent dethiobiotin synthetase BioD (230 aa).

12–17 (DIGKTH) is an ATP binding site. Residue threonine 16 participates in Mg(2+) binding. The active site involves lysine 37. A substrate-binding site is contributed by serine 41. Residues aspartate 52, 115–118 (EGAG), and 175–176 (SE) each bind ATP. The Mg(2+) site is built by aspartate 52 and glutamate 115.

It belongs to the dethiobiotin synthetase family. As to quaternary structure, homodimer. Requires Mg(2+) as cofactor.

The protein localises to the cytoplasm. It carries out the reaction (7R,8S)-7,8-diammoniononanoate + CO2 + ATP = (4R,5S)-dethiobiotin + ADP + phosphate + 3 H(+). Its pathway is cofactor biosynthesis; biotin biosynthesis; biotin from 7,8-diaminononanoate: step 1/2. Functionally, catalyzes a mechanistically unusual reaction, the ATP-dependent insertion of CO2 between the N7 and N8 nitrogen atoms of 7,8-diaminopelargonic acid (DAPA, also called 7,8-diammoniononanoate) to form a ureido ring. The protein is ATP-dependent dethiobiotin synthetase BioD of Caulobacter sp. (strain K31).